The chain runs to 716 residues: Calpain-1 catalytic subunit (716 aa).

The 300-residue stretch at 55–354 (LFRDEAFPPV…FTRLEICNLT (300 aa)) folds into the Calpain catalytic domain. Ca(2+) is bound by residues Gln-109 and Asp-114. Active-site residues include Cys-115, His-272, and Asn-296. Ca(2+) contacts are provided by Asp-318 and Glu-323. Thr-354 is modified (phosphothreonine). The tract at residues 355-528 (PDALKSQRFR…KSAGTQELDD (174 aa)) is domain III. The tract at residues 529–544 (QVQANLPDEQVLSEEE) is linker. 4 EF-hand domains span residues 543–578 (EEID…IISK), 587–620 (FSLE…NRIR), 617–652 (NRIR…AGFK), and 682–716 (VRLE…TMFA). The interval 545–715 (IDENFKSLFR…LFKWLQLTMF (171 aa)) is domain IV. Residues Asp-600, Asp-602, Asn-604, Lys-606, Glu-611, Asp-630, Asp-632, Ser-634, Ser-636, and Glu-641 each coordinate Ca(2+).

It belongs to the peptidase C2 family. In terms of assembly, forms a heterodimer with a small (regulatory) subunit CAPNS1. It depends on Ca(2+) as a cofactor. Undergoes calcium-induced successive autoproteolytic cleavages that generate a membrane-bound 78 kDa active form and an intracellular 75 kDa active form. Calpastatin reduces with high efficiency the transition from 78 kDa to 75 kDa calpain forms.

It localises to the cytoplasm. Its subcellular location is the cell membrane. It catalyses the reaction Broad endopeptidase specificity.. Activated by micromolar concentrations of calcium and inhibited by calpastatin. Its function is as follows. Calcium-regulated non-lysosomal thiol-protease which catalyzes limited proteolysis of substrates involved in cytoskeletal remodeling and signal transduction. Proteolytically cleaves CTBP1. Cleaves and activates caspase-7 (CASP7). In Bos taurus (Bovine), this protein is Calpain-1 catalytic subunit.